Reading from the N-terminus, the 48-residue chain is Acidic phospholipase A2 (48 aa).

Ca(2+) contacts are provided by Tyr-27, Gly-29, and Gly-31. Cys-28 and Cys-44 form a disulfide bridge. His-47 is an active-site residue. Residue Asp-48 participates in Ca(2+) binding.

It belongs to the phospholipase A2 family. Group II subfamily. D49 sub-subfamily. As to quaternary structure, monomer. Ca(2+) is required as a cofactor. In terms of tissue distribution, expressed by the venom gland.

It localises to the secreted. The enzyme catalyses a 1,2-diacyl-sn-glycero-3-phosphocholine + H2O = a 1-acyl-sn-glycero-3-phosphocholine + a fatty acid + H(+). Inhibited by EDTA. Inhibited by Ba(2+), Cu(+), Fe(2+) and Zn(2+) ions and, to a lesser extent, by Mn(2+) and Mg(2+) ions. In terms of biological role, snake venom phospholipase A2 (PLA2) that shows myotoxicity and induces paw edema in mice. Exhibits indirect hemolytic activity. Inhibits platelet aggregation induced by ADP and collagen. PLA2 catalyzes the calcium-dependent hydrolysis of the 2-acyl groups in 3-sn-phosphoglycerides. The polypeptide is Acidic phospholipase A2 (Bothrops pauloensis (Neuwied's lancehead)).